Consider the following 71-residue polypeptide: Protein MMP24OS (71 aa).

The segment covering 1-10 (MGAQLSGGRG) has biased composition (gly residues). Residues 1 to 61 (MGAQLSGGRG…PSPWGPLDDV (61 aa)) are disordered. Over residues 36–55 (HPPQPQPQPQPQPQPEPSPW) the composition is skewed to pro residues.

The polypeptide is Protein MMP24OS (Homo sapiens (Human)).